Reading from the N-terminus, the 682-residue chain is Glucan endo-1,3-beta-glucosidase A1 (682 aa).

The N-terminal stretch at 1–38 (MKPSHFTEKRFMKKVLGLFLVVVMLASVGVLPTSKVQA) is a signal peptide. The region spanning 391–682 (YTFIGNPNAP…VDYVRVYKEQ (292 aa)) is the GH16 domain. The active-site Nucleophile is the Glu552. Glu557 serves as the catalytic Proton donor.

This sequence belongs to the glycosyl hydrolase 16 family.

It is found in the secreted. The enzyme catalyses Hydrolysis of (1-&gt;3)-beta-D-glucosidic linkages in (1-&gt;3)-beta-D-glucans.. In terms of biological role, lysis of cellular walls containing beta-1,3-glucans. Implicated in the defense against fungal pathogens. In Niallia circulans (Bacillus circulans), this protein is Glucan endo-1,3-beta-glucosidase A1 (glcA).